A 156-amino-acid polypeptide reads, in one-letter code: Small ribosomal subunit protein uS7 (156 aa).

This sequence belongs to the universal ribosomal protein uS7 family. In terms of assembly, part of the 30S ribosomal subunit. Contacts proteins S9 and S11.

Its function is as follows. One of the primary rRNA binding proteins, it binds directly to 16S rRNA where it nucleates assembly of the head domain of the 30S subunit. Is located at the subunit interface close to the decoding center, probably blocks exit of the E-site tRNA. The sequence is that of Small ribosomal subunit protein uS7 from Bifidobacterium longum subsp. infantis (strain ATCC 15697 / DSM 20088 / JCM 1222 / NCTC 11817 / S12).